The primary structure comprises 1823 residues: Bromodomain-containing protein DDB_G0280777 (1823 aa).

2 disordered regions span residues 44 to 83 (DNNN…EEDE) and 200 to 281 (LKQT…RTTS). Residues 65-77 (SNKEEEKEEKEEK) are compositionally biased toward basic and acidic residues. The segment covering 210 to 224 (KRRNQQHQNLLKKQK) has biased composition (basic residues). Residues 225–250 (IQKEKEEREQKEKEQKEKEQKEKEEQ) show a composition bias toward basic and acidic residues. Positions 251–262 (QQQLFLLQQQQQ) are enriched in low complexity. One can recognise a Bromo domain in the interval 306–413 (EAQEEMYDQL…KKSKDLMKNV (108 aa)). 8 disordered regions span residues 429-654 (ENKN…EEQT), 753-781 (NCNN…NNSL), 855-886 (INDN…NNKP), 949-993 (NSSK…DEDF), 1055-1079 (LPNN…PPPS), 1190-1386 (IDPK…IQAS), 1453-1477 (QLQQ…QTPQ), and 1679-1823 (QQQQ…QKKQ). 4 stretches are compositionally biased toward low complexity: residues 432-486 (NNNN…NTPL), 494-511 (CSPS…TPQS), 520-555 (QQQQ…ISPR), and 570-579 (SSSSLSSSSL). Residues 580-590 (ALNSQNENGVN) are compositionally biased toward polar residues. The span at 601 to 614 (MESEESTNVKKEEN) shows a compositional bias: basic and acidic residues. Positions 631 to 643 (EGEEQQEQEDEEQ) are enriched in acidic residues. 5 stretches are compositionally biased toward low complexity: residues 753–779 (NCNN…NNNN), 863–884 (NNNN…NNNN), 949–958 (NSSKSNNNSN), 1055–1071 (LPNN…TTQL), and 1205–1378 (NNNN…NNNN). Over residues 1679-1705 (QQQQPQQQQQQPQQQPQQQPQQQQQPQ) the composition is skewed to low complexity. Basic and acidic residues-rich tracts occupy residues 1716-1737 (PKEK…EKDR) and 1744-1755 (KTESKKESKKSL). Low complexity-rich tracts occupy residues 1756–1767 (NDSSNSDINTSV) and 1789–1806 (SSKQ…TQDS). Positions 1813–1823 (KKKRGRPQKKQ) are enriched in basic residues.

This chain is Bromodomain-containing protein DDB_G0280777, found in Dictyostelium discoideum (Social amoeba).